A 128-amino-acid chain; its full sequence is Lutropin subunit beta (128 aa).

The first 20 residues, 1 to 20 (MERLQGLLLWLLLSPSVVWA), serve as a signal peptide directing secretion. Cystine bridges form between Cys-29–Cys-77, Cys-43–Cys-92, Cys-54–Cys-108, Cys-58–Cys-110, and Cys-113–Cys-120. Asn-33 carries an N-linked (GlcNAc...) asparagine glycan.

Belongs to the glycoprotein hormones subunit beta family. Heterodimer of a common alpha chain and a unique beta chain which confers biological specificity to thyrotropin, lutropin, follitropin and gonadotropin.

The protein localises to the secreted. Promotes spermatogenesis and ovulation by stimulating the testes and ovaries to synthesize steroids. The sequence is that of Lutropin subunit beta (LHB) from Phodopus sungorus (Striped hairy-footed hamster).